Reading from the N-terminus, the 141-residue chain is Large ribosomal subunit protein uL16c (141 aa).

This sequence belongs to the universal ribosomal protein uL16 family. In terms of assembly, part of the 50S ribosomal subunit.

The protein resides in the plastid. The protein localises to the chloroplast. The polypeptide is Large ribosomal subunit protein uL16c (Zygnema circumcarinatum (Green alga)).